The primary structure comprises 472 residues: Alanine--anticapsin ligase (472 aa).

Glu-109 serves as a coordination point for Mg(2+). The ATP site is built by Lys-138 and Lys-178. Positions 142–355 constitute an ATP-grasp domain; sequence RAAFNRAGVK…MAQLLLDVLC (214 aa). A Mg(2+)-binding site is contributed by Leu-182. ATP contacts are provided by residues 184 to 185, 226 to 229, and Gln-268; these read SS and EEFL. Residues Glu-273 and 309–311 each bind substrate; that span reads HTE. Positions 311 and 324 each coordinate Mg(2+). 328 to 331 serves as a coordination point for substrate; that stretch reads RFAG.

As to quaternary structure, monomer or homodimer. It depends on Mg(2+) as a cofactor.

It carries out the reaction L-anticapsin + L-alanine + ATP = bacilysin + ADP + phosphate + H(+). Its pathway is antibiotic biosynthesis; bacilysin biosynthesis. Its function is as follows. Part of the bacABCDEFG operon responsible for the biosynthesis of bacilysin, an irreversible inactivator of the glutaminase domain of glucosamine synthetase. Catalyzes the formation of alpha-dipeptides from various L-amino acids in the presence of ATP. In vivo catalyzes the ligation of L-alanine and L-anticapsin (epoxycyclohexanonyl-Ala) to produce the final bacilysin antibiotic (L-Ala-L-4S-cyclohexenonyl-Ala dipeptide). The chain is Alanine--anticapsin ligase from Bacillus amyloliquefaciens (Bacillus velezensis).